A 257-amino-acid polypeptide reads, in one-letter code: Ribonuclease HII (257 aa).

An RNase H type-2 domain is found at 72–257 (TYIAGIDEVG…FAPIKDMIKK (186 aa)). A divalent metal cation-binding residues include aspartate 78, glutamate 79, and aspartate 170.

Belongs to the RNase HII family. Requires Mn(2+) as cofactor. Mg(2+) serves as cofactor.

The protein localises to the cytoplasm. It carries out the reaction Endonucleolytic cleavage to 5'-phosphomonoester.. Functionally, endonuclease that specifically degrades the RNA of RNA-DNA hybrids. The sequence is that of Ribonuclease HII from Bacillus anthracis (strain A0248).